The following is a 235-amino-acid chain: Lipoprotein-releasing system ATP-binding protein LolD (235 aa).

Residues 13-235 (LCCSNIIKRY…SNGMLKISTI (223 aa)) enclose the ABC transporter domain. ATP is bound at residue 49-56 (GASGSGKS).

It belongs to the ABC transporter superfamily. Lipoprotein translocase (TC 3.A.1.125) family. The complex is composed of two ATP-binding proteins (LolD) and two transmembrane proteins (LolC and LolE).

It localises to the cell inner membrane. Functionally, part of the ABC transporter complex LolCDE involved in the translocation of mature outer membrane-directed lipoproteins, from the inner membrane to the periplasmic chaperone, LolA. Responsible for the formation of the LolA-lipoprotein complex in an ATP-dependent manner. The sequence is that of Lipoprotein-releasing system ATP-binding protein LolD from Blochmanniella floridana.